Reading from the N-terminus, the 320-residue chain is Transcription factor NAI1 (320 aa).

The disordered stretch occupies residues 53-105 (TKQMKTNNNMNSTSSSPSSSSSSGSRTSQVISFGSPDTKTNPVETSLNFSNQV). Over residues 58–80 (TNNNMNSTSSSPSSSSSSGSRTS) the composition is skewed to low complexity. A compositionally biased stretch (polar residues) spans 81–105 (QVISFGSPDTKTNPVETSLNFSNQV). One can recognise a bHLH domain in the interval 128–177 (HLLKEHVLAERKRRQKLNERLIALSALLPGLKKTDKATVLEDAIKHLKQL).

As to quaternary structure, homodimer. As to expression, expressed constitutively in roots, leaves, stems, and flowers.

The protein resides in the nucleus. Its function is as follows. Transcription activator that regulates the expression of at least NAI2, PYK10 and PBP1. Required for and mediates the formation of endoplasmic reticulum bodies (ER bodies). Involved in the symbiotic interactions with the endophytes of the Sebacinaceae fungus family, such as Piriformospora indica and Sebacina. The polypeptide is Transcription factor NAI1 (NAI1) (Arabidopsis thaliana (Mouse-ear cress)).